We begin with the raw amino-acid sequence, 669 residues long: Trissin receptor (669 aa).

Residues 1–15 show a composition bias toward polar residues; it reads MIMTMMQTVRAWQQE. The disordered stretch occupies residues 1–90; it reads MIMTMMQTVR…PTGQQPPRLP (90 aa). Residues 1–184 are Extracellular-facing; the sequence is MIMTMMQTVR…EYIFDRTDVR (184 aa). Low complexity predominate over residues 55–74; sequence NQNNGSPNSSPNQSTSAFRQ. N-linked (GlcNAc...) asparagine glycosylation occurs at Asn-66. Residues 79–89 are compositionally biased toward pro residues; that stretch reads HPPTGQQPPRL. N-linked (GlcNAc...) asparagine glycans are attached at residues Asn-120 and Asn-130. Residues 185–205 traverse the membrane as a helical segment; that stretch reads IIFITLYTLVFCCCFFGNLLV. The Cytoplasmic segment spans residues 206–217; the sequence is ILVVTLSRRLRS. Residues 218–238 form a helical membrane-spanning segment; the sequence is ITNFFLANLAFADFCVGLFCV. Over 239-269 the chain is Extracellular; the sequence is MQNLSIYLIESWVFGEFLCRMYQFVHSLSYT. Residue Asn-241 is glycosylated (N-linked (GlcNAc...) asparagine). The cysteines at positions 257 and 340 are disulfide-linked. The helical transmembrane segment at 270-290 threads the bilayer; sequence ASIFILVVICMERYFAIVHPI. The Cytoplasmic portion of the chain corresponds to 291-302; that stretch reads TCKQILTAARLR. The chain crosses the membrane as a helical span at residues 303-323; that stretch reads MVIVTVWITSAVYSTPKFVFS. Residues 324–350 lie on the Extracellular side of the membrane; the sequence is KTIKNIHTQDGQEEEICVLDREMFNSK. Residues 351-371 traverse the membrane as a helical segment; that stretch reads LLDMINFVLLYVMPLLVMTVL. Topologically, residues 372–552 are cytoplasmic; that stretch reads YSKIAIALWR…SSNVLRARRG (181 aa). Over residues 390-401 the composition is skewed to low complexity; it reads VVQHQHQQPQQP. Disordered regions lie at residues 390-481 and 515-537; these read VVQH…RGVS and AHHQ…AGAT. Over residues 414–429 the composition is skewed to basic residues; the sequence is MYHHHPHHHHHHHQHH. The segment covering 441 to 454 has biased composition (gly residues); it reads VGVGLGGGGGGGPG. Residues 455-470 show a composition bias toward low complexity; the sequence is PSLASGGSSTTSLSRK. The segment covering 524–534 has biased composition (gly residues); the sequence is SVGGGSGGAGA. The chain crosses the membrane as a helical span at residues 553 to 573; it reads VVRMLIIFVLTFALCNLPYHA. The Extracellular portion of the chain corresponds to 574–595; the sequence is RKMWQYWSRSYRGDSNFNALLT. A helical membrane pass occupies residues 596 to 616; sequence PLTFLVTYFNSGVNPLLYAFL. The Cytoplasmic segment spans residues 617 to 669; the sequence is SRNFRKGMKELLLCSWKKGKGKSSSNSSMHHKRKALQTHSLPTDTTHIGNEQL. The disordered stretch occupies residues 635–669; the sequence is GKGKSSSNSSMHHKRKALQTHSLPTDTTHIGNEQL. A compositionally biased stretch (polar residues) spans 653-669; sequence QTHSLPTDTTHIGNEQL.

The protein belongs to the G-protein coupled receptor 1 family.

Its subcellular location is the cell membrane. G-protein coupled receptor which is activated by the Trissin peptide in vitro, leading to increased intracellular calcium ion levels. The protein is Trissin receptor of Drosophila melanogaster (Fruit fly).